We begin with the raw amino-acid sequence, 552 residues long: Arginine--tRNA ligase (552 aa).

The 'HIGH' region motif lies at 124–134; the sequence is GNPTGPLHLAH.

Belongs to the class-I aminoacyl-tRNA synthetase family. Monomer.

It is found in the cytoplasm. The enzyme catalyses tRNA(Arg) + L-arginine + ATP = L-arginyl-tRNA(Arg) + AMP + diphosphate. In Tropheryma whipplei (strain Twist) (Whipple's bacillus), this protein is Arginine--tRNA ligase.